A 200-amino-acid chain; its full sequence is Adenylate kinase (200 aa).

10 to 15 lines the ATP pocket; that stretch reads GAGKGT. Residues 30–59 are NMP; that stretch reads STGDMLRAAVAAGTPVGLEAKSIMESGGLV. Residues Thr-31, Arg-36, 57–59, 85–88, and Gln-92 each bind AMP; these read GLV and GFPR. Residues 126-142 form an LID region; that stretch reads KRAEETAARGQPVRKDD. Arg-127 lines the ATP pocket. AMP-binding residues include Arg-139 and Arg-150. Position 178 (Lys-178) interacts with ATP.

The protein belongs to the adenylate kinase family. Monomer.

Its subcellular location is the cytoplasm. The catalysed reaction is AMP + ATP = 2 ADP. Its pathway is purine metabolism; AMP biosynthesis via salvage pathway; AMP from ADP: step 1/1. Functionally, catalyzes the reversible transfer of the terminal phosphate group between ATP and AMP. Plays an important role in cellular energy homeostasis and in adenine nucleotide metabolism. This is Adenylate kinase from Methylorubrum populi (strain ATCC BAA-705 / NCIMB 13946 / BJ001) (Methylobacterium populi).